The sequence spans 186 residues: Iodotyrosine deiodinase (186 aa).

FMN contacts are provided by residues 11–15, 38–39, and Ser-39; these read RKTVR and PS. Residues Met-41, Glu-68, Tyr-72, and Lys-92 each coordinate 3-iodo-L-tyrosine. Residues Met-41, Glu-68, Tyr-72, and Lys-92 each coordinate L-tyrosine. Arg-176 is a binding site for FMN.

The protein belongs to the nitroreductase family. In terms of assembly, homodimer. It depends on FMN as a cofactor.

The catalysed reaction is 2 iodide + L-tyrosine + 2 NADP(+) = 3,5-diiodo-L-tyrosine + 2 NADPH + H(+). It catalyses the reaction iodide + L-tyrosine + NADP(+) = 3-iodo-L-tyrosine + NADPH. The enzyme catalyses 3-iodo-L-tyrosine + iodide + NADP(+) = 3,5-diiodo-L-tyrosine + NADPH + H(+). It carries out the reaction L-tyrosine + chloride + NADP(+) = 3-chloro-L-tyrosine + NADPH. The catalysed reaction is bromide + L-tyrosine + NADP(+) = 3-bromo-L-tyrosine + NADPH. In terms of biological role, catalyzes the dehalogenation of halotyrosines such as 3-bromo-L-tyrosine, 3-chloro-L-tyrosine, 3-iodo-L-tyrosine and 3,5-diiodo-L-tyrosine. Activity towards 2-iodophenol is weak. The sequence is that of Iodotyrosine deiodinase from Thermotoga neapolitana (strain ATCC 49049 / DSM 4359 / NBRC 107923 / NS-E).